We begin with the raw amino-acid sequence, 100 residues long: Integration host factor subunit alpha (100 aa).

Belongs to the bacterial histone-like protein family. In terms of assembly, heterodimer of an alpha and a beta chain.

In terms of biological role, this protein is one of the two subunits of integration host factor, a specific DNA-binding protein that functions in genetic recombination as well as in transcriptional and translational control. In Methylobacillus flagellatus (strain ATCC 51484 / DSM 6875 / VKM B-1610 / KT), this protein is Integration host factor subunit alpha.